Here is a 485-residue protein sequence, read N- to C-terminus: Argininosuccinate lyase (485 aa).

It belongs to the lyase 1 family. Argininosuccinate lyase subfamily.

It is found in the cytoplasm. The enzyme catalyses 2-(N(omega)-L-arginino)succinate = fumarate + L-arginine. Its pathway is amino-acid biosynthesis; L-arginine biosynthesis; L-arginine from L-ornithine and carbamoyl phosphate: step 3/3. The sequence is that of Argininosuccinate lyase from Paracidovorax citrulli (strain AAC00-1) (Acidovorax citrulli).